A 196-amino-acid polypeptide reads, in one-letter code: Small ribosomal subunit protein uS4c (196 aa).

The region spanning 89-150 (MRLDNIVFRL…NQRSKRLVQN (62 aa)) is the S4 RNA-binding domain.

Belongs to the universal ribosomal protein uS4 family. Part of the 30S ribosomal subunit. Contacts protein S5. The interaction surface between S4 and S5 is involved in control of translational fidelity.

Its subcellular location is the plastid. The protein localises to the chloroplast. One of the primary rRNA binding proteins, it binds directly to 16S rRNA where it nucleates assembly of the body of the 30S subunit. Functionally, with S5 and S12 plays an important role in translational accuracy. The protein is Small ribosomal subunit protein uS4c (rps4) of Eleusine indica (Goosegrass).